Consider the following 163-residue polypeptide: Probable chemoreceptor glutamine deamidase CheD (163 aa).

It belongs to the CheD family.

It catalyses the reaction L-glutaminyl-[protein] + H2O = L-glutamyl-[protein] + NH4(+). In terms of biological role, probably deamidates glutamine residues to glutamate on methyl-accepting chemotaxis receptors (MCPs), playing an important role in chemotaxis. The polypeptide is Probable chemoreceptor glutamine deamidase CheD (Borrelia turicatae (strain 91E135)).